Reading from the N-terminus, the 462-residue chain is GTPase Der (462 aa).

EngA-type G domains are found at residues 9-171 (KTIA…NLNQ) and 201-372 (IQVG…ECFS). Residues 15–22 (GQPNVGKS), 62–66 (DTGGM), 123–126 (NKID), 207–214 (GRVNVGKS), 254–258 (DTAGI), and 318–321 (NKWD) each bind GTP. Residues 373–457 (KRIPTSLLNS…PLILNAKDKK (85 aa)) form the KH-like domain.

Belongs to the TRAFAC class TrmE-Era-EngA-EngB-Septin-like GTPase superfamily. EngA (Der) GTPase family. In terms of assembly, associates with the 50S ribosomal subunit.

GTPase that plays an essential role in the late steps of ribosome biogenesis. The chain is GTPase Der from Helicobacter pylori (strain P12).